Here is a 790-residue protein sequence, read N- to C-terminus: Nuclear cap-binding protein subunit 1 (790 aa).

Residues 1 to 26 (MSRRRHSDENDGGQPHKRRKTSDANE) are disordered. The short motif at 3–20 (RRRHSDENDGGQPHKRRK) is the Nuclear localization signal element. Position 7 is a phosphoserine; by RPS6KB1 (Ser-7). A Phosphothreonine; by RPS6KB1 modification is found at Thr-21. At Ser-22 the chain carries Phosphoserine; by RPS6KB1. One can recognise an MIF4G domain in the interval 28–240 (EDHLESLICK…CLWAQIQKLK (213 aa)). Ser-201 carries the post-translational modification Phosphoserine. Lys-204 is subject to N6-acetyllysine. Residues 643–713 (STIRKMNKHV…SEQKNLFLVI (71 aa)) are a coiled coil. Residue Lys-684 forms a Glycyl lysine isopeptide (Lys-Gly) (interchain with G-Cter in SUMO2) linkage. An N6-acetyllysine modification is found at Lys-698.

This sequence belongs to the NCBP1 family. As to quaternary structure, component of the nuclear cap-binding complex (CBC), a heterodimer composed of NCBP1/CBP80 and NCBP2/CBP20 that interacts with m7GpppG-capped RNA. Found in a U snRNA export complex containing PHAX/RNUXA, NCBP1/CBP80, NCBP2/CBP20, RAN, XPO1 and m7G-capped RNA. Identified in a IGF2BP1-dependent mRNP granule complex containing untranslated mRNAs. Interacts with PHAX/RNUXA, SRRT/ARS2, EIF4G2, IGF2BP1, HNRNPF, HNRNPH1, KIAA0427/CTIF, PARN, DROSHA, UPF1 and ALYREF/THOC4. May interact with EIF4G1; the interaction is however controversial since it is reported by PubMed:11340157, PubMed:15059963 and PubMed:15361857, but is not observed by PubMed:19648179. The large PER complex involved in the repression of transcriptional termination is composed of at least PER2, CDK9, DDX5, DHX9, NCBP1/CBP80 and POLR2A. Component of an alternative nuclear cap-binding complex (CBC) composed of NCBP1/CBP80 and NCBP3. Interacts with METTL3. Interacts with ZFC3H1 in a RNase-insensitive manner. Interacts with MTREX. Interacts with TASOR. Interacts with DHX34; the interaction is RNA-dependent. Interacts with KPNA3. In terms of processing, dephosphorylated at Thr-21 by the PNUTS-PP1 complex during RNA polymerase II transcription pause-release.

The protein localises to the nucleus. It is found in the cytoplasm. Component of the cap-binding complex (CBC), which binds cotranscriptionally to the 5'-cap of pre-mRNAs and is involved in various processes such as pre-mRNA splicing, translation regulation, nonsense-mediated mRNA decay, RNA-mediated gene silencing (RNAi) by microRNAs (miRNAs) and mRNA export. The CBC complex is involved in mRNA export from the nucleus via its interaction with ALYREF/THOC4/ALY, leading to the recruitment of the mRNA export machinery to the 5'-end of mRNA and to mRNA export in a 5' to 3' direction through the nuclear pore. The CBC complex is also involved in mediating U snRNA and intronless mRNAs export from the nucleus. The CBC complex is essential for a pioneer round of mRNA translation, before steady state translation when the CBC complex is replaced by cytoplasmic cap-binding protein eIF4E. The pioneer round of mRNA translation mediated by the CBC complex plays a central role in nonsense-mediated mRNA decay (NMD), NMD only taking place in mRNAs bound to the CBC complex, but not on eIF4E-bound mRNAs. The CBC complex enhances NMD in mRNAs containing at least one exon-junction complex (EJC) via its interaction with UPF1, promoting the interaction between UPF1 and UPF2. The CBC complex is also involved in 'failsafe' NMD, which is independent of the EJC complex, while it does not participate in Staufen-mediated mRNA decay (SMD). During cell proliferation, the CBC complex is also involved in microRNAs (miRNAs) biogenesis via its interaction with SRRT/ARS2 and is required for miRNA-mediated RNA interference. The CBC complex also acts as a negative regulator of PARN, thereby acting as an inhibitor of mRNA deadenylation. In the CBC complex, NCBP1/CBP80 does not bind directly capped RNAs (m7GpppG-capped RNA) but is required to stabilize the movement of the N-terminal loop of NCBP2/CBP20 and lock the CBC into a high affinity cap-binding state with the cap structure. Associates with NCBP3 to form an alternative cap-binding complex (CBC) which plays a key role in mRNA export and is particularly important in cellular stress situations such as virus infections. The conventional CBC with NCBP2 binds both small nuclear RNA (snRNA) and messenger (mRNA) and is involved in their export from the nucleus whereas the alternative CBC with NCBP3 does not bind snRNA and associates only with mRNA thereby playing a role only in mRNA export. NCBP1/CBP80 is required for cell growth and viability. The chain is Nuclear cap-binding protein subunit 1 (NCBP1) from Homo sapiens (Human).